Reading from the N-terminus, the 650-residue chain is Acetyl-coenzyme A synthetase (650 aa).

CoA is bound by residues 191-194 (RGGR), threonine 311, and asparagine 335. ATP contacts are provided by residues 387–389 (GEP), 411–416 (DTWWQT), aspartate 501, and arginine 516. Residue serine 524 participates in CoA binding. Position 527 (arginine 527) interacts with ATP. Residues valine 538, histidine 540, and isoleucine 543 each coordinate Mg(2+). Arginine 585 is a binding site for CoA. Lysine 610 carries the N6-acetyllysine modification.

The protein belongs to the ATP-dependent AMP-binding enzyme family. The cofactor is Mg(2+). Post-translationally, acetylated. Deacetylation by the SIR2-homolog deacetylase activates the enzyme.

The catalysed reaction is acetate + ATP + CoA = acetyl-CoA + AMP + diphosphate. Functionally, catalyzes the conversion of acetate into acetyl-CoA (AcCoA), an essential intermediate at the junction of anabolic and catabolic pathways. AcsA undergoes a two-step reaction. In the first half reaction, AcsA combines acetate with ATP to form acetyl-adenylate (AcAMP) intermediate. In the second half reaction, it can then transfer the acetyl group from AcAMP to the sulfhydryl group of CoA, forming the product AcCoA. This chain is Acetyl-coenzyme A synthetase, found in Vibrio vulnificus (strain CMCP6).